Here is a 189-residue protein sequence, read N- to C-terminus: Pyridoxal 5'-phosphate synthase subunit PdxT (189 aa).

Residue 52-54 (GES) coordinates L-glutamine. The Nucleophile role is filled by cysteine 81. L-glutamine contacts are provided by residues arginine 108 and 136 to 137 (IR). Active-site charge relay system residues include histidine 172 and glutamate 174.

The protein belongs to the glutaminase PdxT/SNO family. As to quaternary structure, in the presence of PdxS, forms a dodecamer of heterodimers. Only shows activity in the heterodimer.

It carries out the reaction aldehydo-D-ribose 5-phosphate + D-glyceraldehyde 3-phosphate + L-glutamine = pyridoxal 5'-phosphate + L-glutamate + phosphate + 3 H2O + H(+). The catalysed reaction is L-glutamine + H2O = L-glutamate + NH4(+). Its pathway is cofactor biosynthesis; pyridoxal 5'-phosphate biosynthesis. Functionally, catalyzes the hydrolysis of glutamine to glutamate and ammonia as part of the biosynthesis of pyridoxal 5'-phosphate. The resulting ammonia molecule is channeled to the active site of PdxS. This is Pyridoxal 5'-phosphate synthase subunit PdxT from Haemophilus ducreyi (strain 35000HP / ATCC 700724).